A 255-amino-acid polypeptide reads, in one-letter code: 3-deoxy-manno-octulosonate cytidylyltransferase (255 aa).

It belongs to the KdsB family.

It is found in the cytoplasm. The catalysed reaction is 3-deoxy-alpha-D-manno-oct-2-ulosonate + CTP = CMP-3-deoxy-beta-D-manno-octulosonate + diphosphate. The protein operates within nucleotide-sugar biosynthesis; CMP-3-deoxy-D-manno-octulosonate biosynthesis; CMP-3-deoxy-D-manno-octulosonate from 3-deoxy-D-manno-octulosonate and CTP: step 1/1. It functions in the pathway bacterial outer membrane biogenesis; lipopolysaccharide biosynthesis. Its function is as follows. Activates KDO (a required 8-carbon sugar) for incorporation into bacterial lipopolysaccharide in Gram-negative bacteria. This chain is 3-deoxy-manno-octulosonate cytidylyltransferase, found in Thermodesulfovibrio yellowstonii (strain ATCC 51303 / DSM 11347 / YP87).